We begin with the raw amino-acid sequence, 185 residues long: Ribosome-recycling factor (185 aa).

It belongs to the RRF family.

The protein localises to the cytoplasm. Functionally, responsible for the release of ribosomes from messenger RNA at the termination of protein biosynthesis. May increase the efficiency of translation by recycling ribosomes from one round of translation to another. This chain is Ribosome-recycling factor, found in Nitrosomonas europaea (strain ATCC 19718 / CIP 103999 / KCTC 2705 / NBRC 14298).